Reading from the N-terminus, the 145-residue chain is Lymphocyte antigen 6 complex locus protein G5c (145 aa).

The first 38 residues, Met-1 to Gly-38, serve as a signal peptide directing secretion. The UPAR/Ly6 domain maps to Leu-55–His-145. 5 disulfide bridges follow: Cys-57/Cys-84, Cys-60/Cys-69, Cys-76/Cys-102, Cys-111/Cys-128, and Cys-129/Cys-134. Residue Asn-91 is glycosylated (N-linked (GlcNAc...) asparagine).

In terms of assembly, forms oligomers. In terms of processing, N-glycosylated. As to expression, expression restricted to the caput of epididymis. Detected only from day 24 postnatum.

Its subcellular location is the secreted. May have a role in hematopoietic cell differentiation. The polypeptide is Lymphocyte antigen 6 complex locus protein G5c (Ly6g5c) (Rattus norvegicus (Rat)).